The sequence spans 366 residues: Aminomethyltransferase (366 aa).

The protein belongs to the GcvT family. As to quaternary structure, the glycine cleavage system is composed of four proteins: P, T, L and H.

It carries out the reaction N(6)-[(R)-S(8)-aminomethyldihydrolipoyl]-L-lysyl-[protein] + (6S)-5,6,7,8-tetrahydrofolate = N(6)-[(R)-dihydrolipoyl]-L-lysyl-[protein] + (6R)-5,10-methylene-5,6,7,8-tetrahydrofolate + NH4(+). Functionally, the glycine cleavage system catalyzes the degradation of glycine. This chain is Aminomethyltransferase, found in Neisseria meningitidis serogroup A / serotype 4A (strain DSM 15465 / Z2491).